Reading from the N-terminus, the 145-residue chain is D-aminoacyl-tRNA deacylase (145 aa).

The Gly-cisPro motif, important for rejection of L-amino acids motif lies at 137-138; that stretch reads GP.

Belongs to the DTD family. As to quaternary structure, homodimer.

The protein resides in the cytoplasm. The catalysed reaction is glycyl-tRNA(Ala) + H2O = tRNA(Ala) + glycine + H(+). It catalyses the reaction a D-aminoacyl-tRNA + H2O = a tRNA + a D-alpha-amino acid + H(+). An aminoacyl-tRNA editing enzyme that deacylates mischarged D-aminoacyl-tRNAs. Also deacylates mischarged glycyl-tRNA(Ala), protecting cells against glycine mischarging by AlaRS. Acts via tRNA-based rather than protein-based catalysis; rejects L-amino acids rather than detecting D-amino acids in the active site. By recycling D-aminoacyl-tRNA to D-amino acids and free tRNA molecules, this enzyme counteracts the toxicity associated with the formation of D-aminoacyl-tRNA entities in vivo and helps enforce protein L-homochirality. The polypeptide is D-aminoacyl-tRNA deacylase (Psychromonas ingrahamii (strain DSM 17664 / CCUG 51855 / 37)).